We begin with the raw amino-acid sequence, 58 residues long: MVNLLQIVRDHWVHVLVPMGFVIGCYLDRKSDERLTAFRNKSMLFKRELQPSEEVTWK.

A helical membrane pass occupies residues 11-27 (HWVHVLVPMGFVIGCYL).

The protein belongs to the complex I NDUFB1 subunit family. In terms of assembly, complex I is composed of 45 different subunits.

It localises to the mitochondrion inner membrane. Accessory subunit of the mitochondrial membrane respiratory chain NADH dehydrogenase (Complex I) that is believed not to be involved in catalysis. Complex I functions in the transfer of electrons from NADH to the respiratory chain. The immediate electron acceptor for the enzyme is believed to be ubiquinone. This Homo sapiens (Human) protein is NADH dehydrogenase [ubiquinone] 1 beta subcomplex subunit 1 (NDUFB1).